Consider the following 430-residue polypeptide: CinA-like protein (430 aa).

The protein belongs to the CinA family.

The chain is CinA-like protein from Mycobacterium tuberculosis (strain ATCC 25177 / H37Ra).